A 405-amino-acid chain; its full sequence is Argininosuccinate synthase (405 aa).

ATP-binding positions include Ala-10 to Ser-18 and Ala-37. Residues Tyr-88 and Ser-93 each contribute to the L-citrulline site. ATP is bound at residue Gly-118. The L-aspartate site is built by Thr-120, Asn-124, and Asp-125. Asn-124 provides a ligand contact to L-citrulline. L-citrulline contacts are provided by Arg-128, Ser-179, Ser-188, Glu-264, and Tyr-276.

Belongs to the argininosuccinate synthase family. Type 1 subfamily. Homotetramer.

It localises to the cytoplasm. The enzyme catalyses L-citrulline + L-aspartate + ATP = 2-(N(omega)-L-arginino)succinate + AMP + diphosphate + H(+). The protein operates within amino-acid biosynthesis; L-arginine biosynthesis; L-arginine from L-ornithine and carbamoyl phosphate: step 2/3. This is Argininosuccinate synthase from Pseudomonas syringae pv. syringae (strain B728a).